We begin with the raw amino-acid sequence, 508 residues long: Probable cytosol aminopeptidase (508 aa).

Lys-276 and Asp-281 together coordinate Mn(2+). The active site involves Lys-288. 3 residues coordinate Mn(2+): Asp-299, Asp-358, and Glu-360. Arg-362 is an active-site residue.

Belongs to the peptidase M17 family. Requires Mn(2+) as cofactor.

The protein localises to the cytoplasm. The catalysed reaction is Release of an N-terminal amino acid, Xaa-|-Yaa-, in which Xaa is preferably Leu, but may be other amino acids including Pro although not Arg or Lys, and Yaa may be Pro. Amino acid amides and methyl esters are also readily hydrolyzed, but rates on arylamides are exceedingly low.. The enzyme catalyses Release of an N-terminal amino acid, preferentially leucine, but not glutamic or aspartic acids.. Its function is as follows. Presumably involved in the processing and regular turnover of intracellular proteins. Catalyzes the removal of unsubstituted N-terminal amino acids from various peptides. The polypeptide is Probable cytosol aminopeptidase (Chlorobium luteolum (strain DSM 273 / BCRC 81028 / 2530) (Pelodictyon luteolum)).